The following is a 151-amino-acid chain: MEKTYLPTVSTADKKWYVVDAENQRLGRLATQIAMILRGKNKPTYTPFMNTGDFVIVINAEKVTVTGNKGEQKLYRRHSGRPGGMKTETFNHLQERIPERIIEKAVKGMLPKNALGRQLFRSLKVYAGPDHPHAAQKPEVLSIQTIPGAKS.

This sequence belongs to the universal ribosomal protein uL13 family. In terms of assembly, part of the 50S ribosomal subunit.

Functionally, this protein is one of the early assembly proteins of the 50S ribosomal subunit, although it is not seen to bind rRNA by itself. It is important during the early stages of 50S assembly. This chain is Large ribosomal subunit protein uL13, found in Acaryochloris marina (strain MBIC 11017).